The sequence spans 469 residues: MFPFFFALFFSSTDVLAASPSYNGLGLTPQMGWDNWNSFGCSVKEELLLGTAEKIVKLGLKDLGYNYIILDDCWSSGRSSNGSLLADDSKFPHGMKYVAEQLHNSQLKFGMYSSAGEYTCAGYAGSLGYEDMDAATFASWDVDYLKYDNCYNKGEFGTPEISYKRYKAMSDALNKTGRPIFYSLCNWGQDLTFYWGSAISNSWRMSGDVYPQFDRPDSRCPCSGDEYDCSYPGFHCSIMNILNKAAPMGQNAAPGGWNDLDMLEVGVGNMSDSEEVAHFSMWAIVKSPLIIGADIDDLKDSSLSVYSNPAVIAINQDVLGTPATRIWKYHVSDKDQYGEGEIQLWSGPLDNGDHVVALLNGGNNERSMNASWNDIFIDYLADSDELSNTWGLYDLWARRMSNATAASILSGNMTSAGLNYNVTQLNYTAGIARNDSRLFGDRVVELSKGESLTATVPGHGVALFRLRPE.

Residues 1 to 17 (MFPFFFALFFSSTDVLA) form the signal peptide. A disulfide bridge connects residues C41 and C73. 2 residues coordinate substrate: D71 and D72. The N-linked (GlcNAc...) asparagine glycan is linked to N81. A disulfide bond links C120 and C150. Residue K146 coordinates substrate. Residue D148 is the Nucleophile of the active site. N174 is a glycosylation site (N-linked (GlcNAc...) asparagine). Position 204 (R204) interacts with substrate. Catalysis depends on D208, which acts as the Proton donor. Intrachain disulfides connect C220–C236 and C222–C229. Q250 contributes to the substrate binding site. Residues N269, N369, N402, N412, N421, N426, and N434 are each glycosylated (N-linked (GlcNAc...) asparagine).

This sequence belongs to the glycosyl hydrolase 27 family. In terms of assembly, homotetramer.

It is found in the secreted. The enzyme catalyses Hydrolysis of terminal, non-reducing alpha-D-galactose residues in alpha-D-galactosides, including galactose oligosaccharides, galactomannans and galactolipids.. This Lachancea cidri (Yeast) protein is Alpha-galactosidase (MEL).